The sequence spans 1262 residues: Protein stoned-B (1262 aa).

4 short sequence motifs (NPF) span residues 3–5 (NPF), 19–21 (NPF), 33–35 (NPF), and 43–45 (NPF). Residues 17–36 (AANPFLMQSEPEPSSDNPFM) form a disordered region. The tract at residues 49–189 (ADDLELGAEP…DVSVDSGSSA (141 aa)) is disordered. Positions 50–60 (DDLELGAEPEA) are enriched in acidic residues. Low complexity predominate over residues 101-111 (PPQSQPQLQSH). The segment covering 115-124 (HPPPPRPLVP) has biased composition (pro residues). The segment covering 128–145 (TQDLISTVSSQLDETSSE) has biased composition (polar residues). Low complexity predominate over residues 172 to 189 (DSGLADLLDVSVDSGSSA). The NPF 5 motif lies at 210–212 (NPF). 2 disordered regions span residues 225–452 (VPLP…SPPT) and 474–507 (EEMD…NFAP). Pro residues predominate over residues 233 to 272 (KQPPRPPPPRPAPPRPAPPGQAAPQRPPPPLAAVNPPPAA). The span at 325–345 (DLDETIGEGEPPEQEEPDTEQ) shows a compositional bias: acidic residues. Polar residues predominate over residues 384–401 (QVNNMAAPSGTASTQRAT). The span at 417–429 (DDEDEPEAMQEPE) shows a compositional bias: acidic residues. The short motif at 493 to 495 (NPF) is the NPF 6 element. Residues Ser-623 and Ser-626 each carry the phosphoserine modification. Residues 643–709 (SGVAPQLAPP…QDTPQTPLYD (67 aa)) form a disordered region. Positions 673 to 675 (NPF) match the NPF 7 motif. In terms of domain architecture, SHD spans 728-902 (GWEMQLRQPN…KIPALRERAL (175 aa)). The interaction with Syt stretch occupies residues 847–1108 (KEFGSDLKKL…KGIERILGAV (262 aa)). Residues 906–1219 (MEEVQVTAVD…ARHEYKVGIE (314 aa)) enclose the MHD domain. Residues 1226–1262 (TNAYLAATRPIREEPPTTATKPTASPVAPSDSDTDSN) are disordered. Over residues 1241–1254 (PTTATKPTASPVAP) the composition is skewed to low complexity.

This sequence belongs to the Stoned B family. In terms of assembly, interacts with the second C2 domain of Syt.

It is found in the cytoplasm. It localises to the synapse. In terms of biological role, adapter protein involved in endocytic recycling of synaptic vesicles membranes. May act by mediating the retrieval of synaptotagmin protein Syt from the plasma membrane, thereby facilitating the internalization of multiple synaptic vesicles from the plasma membrane. The protein is Protein stoned-B (stnB) of Drosophila melanogaster (Fruit fly).